A 146-amino-acid chain; its full sequence is Hemoglobin subunit beta (146 aa).

One can recognise a Globin domain in the interval 2–146; the sequence is FLTAEEKGLV…VANALAHKYH (145 aa). A Phosphoserine modification is found at Ser44. N6-acetyllysine is present on Lys59. Residue His63 coordinates heme b. The residue at position 82 (Lys82) is an N6-acetyllysine. His92 lines the heme b pocket. Cys93 carries the S-nitrosocysteine modification. N6-acetyllysine is present on Lys144.

The protein belongs to the globin family. Heterotetramer of two alpha chains and two beta chains. Red blood cells.

Functionally, involved in oxygen transport from the lung to the various peripheral tissues. The protein is Hemoglobin subunit beta (HBB) of Lynx lynx (Eurasian lynx).